We begin with the raw amino-acid sequence, 352 residues long: Holliday junction branch migration complex subunit RuvB (352 aa).

The segment at 4–185 is large ATPase domain (RuvB-L); the sequence is PDRLISAVSG…FGIVQRLEFY (182 aa). ATP-binding positions include I24, R25, G66, K69, T70, T71, 132–134, R175, Y185, and R222; that span reads EDF. A Mg(2+)-binding site is contributed by T70. The interval 186-256 is small ATPAse domain (RuvB-S); that stretch reads NVEDLATIVS…IADKALNLLD (71 aa). Residues 259-352 are head domain (RuvB-H); it reads ERGFDHLDRR…SDLFTSEDGN (94 aa). DNA contacts are provided by R295, R314, and R319.

It belongs to the RuvB family. Homohexamer. Forms an RuvA(8)-RuvB(12)-Holliday junction (HJ) complex. HJ DNA is sandwiched between 2 RuvA tetramers; dsDNA enters through RuvA and exits via RuvB. An RuvB hexamer assembles on each DNA strand where it exits the tetramer. Each RuvB hexamer is contacted by two RuvA subunits (via domain III) on 2 adjacent RuvB subunits; this complex drives branch migration. In the full resolvosome a probable DNA-RuvA(4)-RuvB(12)-RuvC(2) complex forms which resolves the HJ.

It localises to the cytoplasm. It catalyses the reaction ATP + H2O = ADP + phosphate + H(+). In terms of biological role, the RuvA-RuvB-RuvC complex processes Holliday junction (HJ) DNA during genetic recombination and DNA repair, while the RuvA-RuvB complex plays an important role in the rescue of blocked DNA replication forks via replication fork reversal (RFR). RuvA specifically binds to HJ cruciform DNA, conferring on it an open structure. The RuvB hexamer acts as an ATP-dependent pump, pulling dsDNA into and through the RuvAB complex. RuvB forms 2 homohexamers on either side of HJ DNA bound by 1 or 2 RuvA tetramers; 4 subunits per hexamer contact DNA at a time. Coordinated motions by a converter formed by DNA-disengaged RuvB subunits stimulates ATP hydrolysis and nucleotide exchange. Immobilization of the converter enables RuvB to convert the ATP-contained energy into a lever motion, pulling 2 nucleotides of DNA out of the RuvA tetramer per ATP hydrolyzed, thus driving DNA branch migration. The RuvB motors rotate together with the DNA substrate, which together with the progressing nucleotide cycle form the mechanistic basis for DNA recombination by continuous HJ branch migration. Branch migration allows RuvC to scan DNA until it finds its consensus sequence, where it cleaves and resolves cruciform DNA. The sequence is that of Holliday junction branch migration complex subunit RuvB from Pseudomonas paraeruginosa (strain DSM 24068 / PA7) (Pseudomonas aeruginosa (strain PA7)).